We begin with the raw amino-acid sequence, 386 residues long: Bifunctional enzyme IspD/IspF (386 aa).

The segment at 1–230 (MIRDERVAAI…RARSILEAPV (230 aa)) is 2-C-methyl-D-erythritol 4-phosphate cytidylyltransferase. Residues 231 to 386 (AMGVGYDTHR…HAVALLVRVR (156 aa)) form a 2-C-methyl-D-erythritol 2,4-cyclodiphosphate synthase region. A divalent metal cation-binding residues include Asp237 and His239. 4-CDP-2-C-methyl-D-erythritol 2-phosphate is bound by residues 237 to 239 (DTH) and 262 to 263 (HS). His270 is a binding site for a divalent metal cation. Residues 284 to 286 (DLG), 289 to 293 (FPDTD), 360 to 363 (TTGE), Phe367, and Arg370 contribute to the 4-CDP-2-C-methyl-D-erythritol 2-phosphate site.

The protein in the N-terminal section; belongs to the IspD/TarI cytidylyltransferase family. IspD subfamily. This sequence in the C-terminal section; belongs to the IspF family. A divalent metal cation serves as cofactor.

It catalyses the reaction 2-C-methyl-D-erythritol 4-phosphate + CTP + H(+) = 4-CDP-2-C-methyl-D-erythritol + diphosphate. The enzyme catalyses 4-CDP-2-C-methyl-D-erythritol 2-phosphate = 2-C-methyl-D-erythritol 2,4-cyclic diphosphate + CMP. Its pathway is isoprenoid biosynthesis; isopentenyl diphosphate biosynthesis via DXP pathway; isopentenyl diphosphate from 1-deoxy-D-xylulose 5-phosphate: step 2/6. It participates in isoprenoid biosynthesis; isopentenyl diphosphate biosynthesis via DXP pathway; isopentenyl diphosphate from 1-deoxy-D-xylulose 5-phosphate: step 4/6. Its function is as follows. Bifunctional enzyme that catalyzes the formation of 4-diphosphocytidyl-2-C-methyl-D-erythritol from CTP and 2-C-methyl-D-erythritol 4-phosphate (MEP) (IspD), and catalyzes the conversion of 4-diphosphocytidyl-2-C-methyl-D-erythritol 2-phosphate (CDP-ME2P) to 2-C-methyl-D-erythritol 2,4-cyclodiphosphate (ME-CPP) with a corresponding release of cytidine 5-monophosphate (CMP) (IspF). The sequence is that of Bifunctional enzyme IspD/IspF from Anaeromyxobacter sp. (strain Fw109-5).